Consider the following 498-residue polypeptide: Lysine--tRNA ligase (498 aa).

Positions 401 and 408 each coordinate Mg(2+).

It belongs to the class-II aminoacyl-tRNA synthetase family. As to quaternary structure, homodimer. Mg(2+) serves as cofactor.

Its subcellular location is the cytoplasm. The enzyme catalyses tRNA(Lys) + L-lysine + ATP = L-lysyl-tRNA(Lys) + AMP + diphosphate. The polypeptide is Lysine--tRNA ligase (Dehalococcoides mccartyi (strain CBDB1)).